Consider the following 319-residue polypeptide: Protein sprouty homolog 1 (319 aa).

N-acetylmethionine is present on M1. A disordered region spans residues T54 to Q160. Positions P69–E79 are enriched in basic and acidic residues. The segment covering S112–S131 has biased composition (low complexity). The SPR domain maps to Q183–C295.

This sequence belongs to the sprouty family. Forms heterodimers with SPRY2. Interacts with TESK1. Interacts with CAV1 (via C-terminus).

Its subcellular location is the cytoplasm. It localises to the membrane. Inhibits fibroblast growth factor (FGF)-induced retinal lens fiber differentiation, probably by inhibiting FGF-mediated phosphorylation of ERK1/2. Inhibits TGFB-induced epithelial-to-mesenchymal transition in lens epithelial cells. This is Protein sprouty homolog 1 (SPRY1) from Cervus elaphus (Red deer).